Here is a 787-residue protein sequence, read N- to C-terminus: MTQYMPLFRSCSSLRLVSQLHAHLLVTGRLRRDPLPVTKLIESYAFMGSPDSSRLVFEAFPYPDSFMYGVLIKCNVWCHLLDAAIDLYHRLVSETTQISKFVFPSVLRACAGSREHLSVGGKVHGRIIKGGVDDDAVIETSLLCMYGQTGNLSDAEKVFDGMPVRDLVAWSTLVSSCLENGEVVKALRMFKCMVDDGVEPDAVTMISVVEGCAELGCLRIARSVHGQITRKMFDLDETLCNSLLTMYSKCGDLLSSERIFEKIAKKNAVSWTAMISSYNRGEFSEKALRSFSEMIKSGIEPNLVTLYSVLSSCGLIGLIREGKSVHGFAVRRELDPNYESLSLALVELYAECGKLSDCETVLRVVSDRNIVAWNSLISLYAHRGMVIQALGLFRQMVTQRIKPDAFTLASSISACENAGLVPLGKQIHGHVIRTDVSDEFVQNSLIDMYSKSGSVDSASTVFNQIKHRSVVTWNSMLCGFSQNGNSVEAISLFDYMYHSYLEMNEVTFLAVIQACSSIGSLEKGKWVHHKLIISGLKDLFTDTALIDMYAKCGDLNAAETVFRAMSSRSIVSWSSMINAYGMHGRIGSAISTFNQMVESGTKPNEVVFMNVLSACGHSGSVEEGKYYFNLMKSFGVSPNSEHFACFIDLLSRSGDLKEAYRTIKEMPFLADASVWGSLVNGCRIHQKMDIIKAIKNDLSDIVTDDTGYYTLLSNIYAEEGEWEEFRRLRSAMKSSNLKKVPGYSAIEIDQKVFRFGAGEENRIQTDEIYRFLGNLQNLTNEEHVVDS.

A mitochondrion-targeting transit peptide spans Met-1 to Leu-16. PPR repeat units lie at residues Asp-33–Pro-63, Asp-64–Ile-98, Ser-99–Asp-134, Asp-135–Arg-165, Asp-166–Pro-200, Asp-201–Leu-235, Asp-236–Lys-266, Asn-267–Pro-301, Asn-302–Pro-336, Tyr-338–Arg-368, Asn-369–Pro-403, Asp-404–Thr-434, Asp-438–Arg-468, Ser-469–Met-503, Asn-504–Ser-534, Asp-538–Arg-568, Ser-569–Pro-603, Asn-604–Pro-638, and Asn-639–Leu-669. The type E motif stretch occupies residues Val-674–Asp-749. The type E(+) motif stretch occupies residues Gln-750–Asn-780.

The protein belongs to the PPR family. PCMP-E subfamily.

It is found in the mitochondrion. This is Putative pentatricopeptide repeat-containing protein At1g69350, mitochondrial (PCMP-E66) from Arabidopsis thaliana (Mouse-ear cress).